Here is a 99-residue protein sequence, read N- to C-terminus: Prostate and testis expressed protein 4 (99 aa).

An N-terminal signal peptide occupies residues 1–23 (MNSVTKISTLLIVILSFLCFVEG). The UPAR/Ly6 domain occupies 24 to 99 (LICNSCEKSR…CCEKNLCNSF (76 aa)). Cystine bridges form between cysteine 26/cysteine 52, cysteine 29/cysteine 37, cysteine 44/cysteine 70, and cysteine 74/cysteine 90.

As to expression, expressed in prostate, testis, eye, kidney and skeletal muscle. Expressed in the dorsal lobe of prostate. Not expressed in the ventral lobe of prostate.

It is found in the secreted. Functionally, enhances sperm motility. Binds to calmodulin and inhibits calcium transport into spermatozoa. May modulate the function of nicotinic acetylcholine receptors. This Mus musculus (Mouse) protein is Prostate and testis expressed protein 4 (Pate4).